A 63-amino-acid polypeptide reads, in one-letter code: Hirudin (63 aa).

The interval 1–3 is interaction with thrombin active site; sequence VVY. 3 cysteine pairs are disulfide-bonded: C6/C14, C16/C28, and C22/C39. Residues 39-63 form a disordered region; that stretch reads CVTGEGTPGPQSHNDGDFEEPEEYL. T45 is a glycosylation site (O-linked (GalNAc...) threonine). Residues 55 to 63 are interaction with fibrinogen-binding exosite of thrombin; that stretch reads DFEEPEEYL. Residue Y62 is modified to Sulfotyrosine.

This sequence belongs to the protease inhibitor I14 (hirudin) family.

Its subcellular location is the secreted. Functionally, hirudin is a potent thrombin-specific protease inhibitor. It forms a stable non-covalent complex with alpha-thrombin, thereby abolishing its ability to cleave fibrinogen. In Poecilobdella viridis (Indian freshwater leech), this protein is Hirudin.